The chain runs to 64 residues: Large ribosomal subunit protein uL29 (64 aa).

Belongs to the universal ribosomal protein uL29 family.

The protein is Large ribosomal subunit protein uL29 of Nitrosomonas europaea (strain ATCC 19718 / CIP 103999 / KCTC 2705 / NBRC 14298).